Consider the following 292-residue polypeptide: Porphobilinogen deaminase (292 aa).

Position 236 is an S-(dipyrrolylmethanemethyl)cysteine (Cys-236).

It belongs to the HMBS family. As to quaternary structure, monomer. Requires dipyrromethane as cofactor.

It catalyses the reaction 4 porphobilinogen + H2O = hydroxymethylbilane + 4 NH4(+). Its pathway is porphyrin-containing compound metabolism; protoporphyrin-IX biosynthesis; coproporphyrinogen-III from 5-aminolevulinate: step 2/4. In terms of biological role, tetrapolymerization of the monopyrrole PBG into the hydroxymethylbilane pre-uroporphyrinogen in several discrete steps. This Wolbachia sp. subsp. Drosophila simulans (strain wRi) protein is Porphobilinogen deaminase.